Reading from the N-terminus, the 130-residue chain is Small ribosomal subunit protein uS11 (130 aa).

This sequence belongs to the universal ribosomal protein uS11 family. Part of the 30S ribosomal subunit. Interacts with proteins S7 and S18. Binds to IF-3.

Its function is as follows. Located on the platform of the 30S subunit, it bridges several disparate RNA helices of the 16S rRNA. Forms part of the Shine-Dalgarno cleft in the 70S ribosome. The polypeptide is Small ribosomal subunit protein uS11 (Parasynechococcus marenigrum (strain WH8102)).